The primary structure comprises 89 residues: Conotoxin Lt6.4 (89 aa).

Positions 1–22 (MKLTCVPIVAMLFLMACQLITA) are cleaved as a signal peptide. Positions 23–50 (DYSREKHGYSAEKSSDKIQDSFYSKLTK) are excised as a propeptide. 3 disulfides stabilise this stretch: C52/C67, C59/C71, and C66/C80.

Belongs to the conotoxin O1 superfamily. Expressed by the venom duct.

Its subcellular location is the secreted. The chain is Conotoxin Lt6.4 from Conus litteratus (Lettered cone).